We begin with the raw amino-acid sequence, 295 residues long: Ribosomal RNA small subunit methyltransferase A (295 aa).

S-adenosyl-L-methionine contacts are provided by N29, L31, G56, E77, D102, and N127.

The protein belongs to the class I-like SAM-binding methyltransferase superfamily. rRNA adenine N(6)-methyltransferase family. RsmA subfamily.

It is found in the cytoplasm. The enzyme catalyses adenosine(1518)/adenosine(1519) in 16S rRNA + 4 S-adenosyl-L-methionine = N(6)-dimethyladenosine(1518)/N(6)-dimethyladenosine(1519) in 16S rRNA + 4 S-adenosyl-L-homocysteine + 4 H(+). In terms of biological role, specifically dimethylates two adjacent adenosines (A1518 and A1519) in the loop of a conserved hairpin near the 3'-end of 16S rRNA in the 30S particle. May play a critical role in biogenesis of 30S subunits. The protein is Ribosomal RNA small subunit methyltransferase A of Anoxybacillus flavithermus (strain DSM 21510 / WK1).